The sequence spans 461 residues: A-type ATP synthase subunit B (461 aa).

This sequence belongs to the ATPase alpha/beta chains family. Has multiple subunits with at least A(3), B(3), C, D, E, F, H, I and proteolipid K(x).

It is found in the cell membrane. Component of the A-type ATP synthase that produces ATP from ADP in the presence of a proton gradient across the membrane. The B chain is a regulatory subunit. The chain is A-type ATP synthase subunit B from Nitrosopumilus maritimus (strain SCM1).